A 179-amino-acid polypeptide reads, in one-letter code: Large ribosomal subunit protein uL10 (179 aa).

Belongs to the universal ribosomal protein uL10 family. Part of the ribosomal stalk of the 50S ribosomal subunit. The N-terminus interacts with L11 and the large rRNA to form the base of the stalk. The C-terminus forms an elongated spine to which L12 dimers bind in a sequential fashion forming a multimeric L10(L12)X complex.

Its function is as follows. Forms part of the ribosomal stalk, playing a central role in the interaction of the ribosome with GTP-bound translation factors. The chain is Large ribosomal subunit protein uL10 from Polynucleobacter necessarius subsp. necessarius (strain STIR1).